Here is a 300-residue protein sequence, read N- to C-terminus: Fructose-bisphosphate aldolase class 1 (300 aa).

Catalysis depends on Glu-181, which acts as the Proton acceptor. Residue Lys-218 is the Schiff-base intermediate with dihydroxyacetone-P of the active site.

This sequence belongs to the class I fructose-bisphosphate aldolase family.

The enzyme catalyses beta-D-fructose 1,6-bisphosphate = D-glyceraldehyde 3-phosphate + dihydroxyacetone phosphate. It participates in carbohydrate degradation; glycolysis; D-glyceraldehyde 3-phosphate and glycerone phosphate from D-glucose: step 4/4. The chain is Fructose-bisphosphate aldolase class 1 (fda) from Synechocystis sp. (strain ATCC 27184 / PCC 6803 / Kazusa).